The primary structure comprises 246 residues: UDP-N-acetyl-D-mannosaminuronic acid transferase (246 aa).

The protein belongs to the glycosyltransferase 26 family.

The enzyme catalyses UDP-N-acetyl-alpha-D-mannosaminouronate + N-acetyl-alpha-D-glucosaminyl-di-trans,octa-cis-undecaprenyl diphosphate = beta-D-ManNAcA-(1-&gt;4)-alpha-D-GlcNAc-di-trans,octa-cis-undecaprenyl diphosphate + UDP + H(+). It functions in the pathway bacterial outer membrane biogenesis; enterobacterial common antigen biosynthesis. Catalyzes the synthesis of Und-PP-GlcNAc-ManNAcA (Lipid II), the second lipid-linked intermediate involved in enterobacterial common antigen (ECA) synthesis. This Salmonella schwarzengrund (strain CVM19633) protein is UDP-N-acetyl-D-mannosaminuronic acid transferase.